We begin with the raw amino-acid sequence, 476 residues long: ATP synthase subunit beta (476 aa).

153-160 (GGAGVGKT) contacts ATP.

It belongs to the ATPase alpha/beta chains family. As to quaternary structure, F-type ATPases have 2 components, CF(1) - the catalytic core - and CF(0) - the membrane proton channel. CF(1) has five subunits: alpha(3), beta(3), gamma(1), delta(1), epsilon(1). CF(0) has three main subunits: a(1), b(2) and c(9-12). The alpha and beta chains form an alternating ring which encloses part of the gamma chain. CF(1) is attached to CF(0) by a central stalk formed by the gamma and epsilon chains, while a peripheral stalk is formed by the delta and b chains.

Its subcellular location is the cell membrane. The enzyme catalyses ATP + H2O + 4 H(+)(in) = ADP + phosphate + 5 H(+)(out). Functionally, produces ATP from ADP in the presence of a proton gradient across the membrane. The catalytic sites are hosted primarily by the beta subunits. This is ATP synthase subunit beta from Latilactobacillus sakei subsp. sakei (strain 23K) (Lactobacillus sakei subsp. sakei).